A 154-amino-acid polypeptide reads, in one-letter code: Endoribonuclease YbeY (154 aa).

Zn(2+)-binding residues include His-113, His-117, and His-123.

The protein belongs to the endoribonuclease YbeY family. The cofactor is Zn(2+).

The protein localises to the cytoplasm. Its function is as follows. Single strand-specific metallo-endoribonuclease involved in late-stage 70S ribosome quality control and in maturation of the 3' terminus of the 16S rRNA. The sequence is that of Endoribonuclease YbeY from Vibrio vulnificus (strain CMCP6).